The following is a 279-amino-acid chain: Large ribosomal subunit protein uL2 (279 aa).

The segment at 223 to 279 (VVMNPVDHPHGGGEGRTSGGRHPVTPWGKPTKGKRTRSNKKTDSLIMRSRHLAKKKR) is disordered. Over residues 270 to 279 (RSRHLAKKKR) the composition is skewed to basic residues.

The protein belongs to the universal ribosomal protein uL2 family. Part of the 50S ribosomal subunit. Forms a bridge to the 30S subunit in the 70S ribosome.

Its function is as follows. One of the primary rRNA binding proteins. Required for association of the 30S and 50S subunits to form the 70S ribosome, for tRNA binding and peptide bond formation. It has been suggested to have peptidyltransferase activity; this is somewhat controversial. Makes several contacts with the 16S rRNA in the 70S ribosome. The sequence is that of Large ribosomal subunit protein uL2 from Rhodospirillum rubrum (strain ATCC 11170 / ATH 1.1.1 / DSM 467 / LMG 4362 / NCIMB 8255 / S1).